The primary structure comprises 286 residues: ATP synthase gamma chain (286 aa).

The protein belongs to the ATPase gamma chain family. In terms of assembly, F-type ATPases have 2 components, CF(1) - the catalytic core - and CF(0) - the membrane proton channel. CF(1) has five subunits: alpha(3), beta(3), gamma(1), delta(1), epsilon(1). CF(0) has three main subunits: a, b and c.

The protein localises to the cell inner membrane. Produces ATP from ADP in the presence of a proton gradient across the membrane. The gamma chain is believed to be important in regulating ATPase activity and the flow of protons through the CF(0) complex. In Marinomonas sp. (strain MWYL1), this protein is ATP synthase gamma chain.